The chain runs to 281 residues: MTFFELVKALILGIVEGLTEFAPVSSTGHQILVDDMWLQTKYVLNSQESANTFKIVIQLGSIFAAAWIFRHRFLEVLHIEKTKTEGPRLNLLHIFIGLIPAGIMGLLFDDFIDKHLFSVPTVLIGLALGALLMIAADLFNKKVTHTTTVDEMTYKQALIIGVAQCLALWPGFSRSGSTISAGVLLKMNHKAASDFTFIMAVPIMFAASAKSLASNIQYIHSDQILFYIVGFIAAFIFGVLSIRLFLSLINRVKLMPFAIYRLILVAVIAVLYFGFGIGKGI.

The next 7 helical transmembrane spans lie at 49 to 69 (SANT…AWIF), 92 to 112 (LHIF…DDFI), 116 to 136 (LFSV…MIAA), 152 to 172 (MTYK…WPGF), 196 to 216 (TFIM…ASNI), 224 to 244 (ILFY…SIRL), and 257 to 277 (FAIY…GFGI).

It belongs to the UppP family.

It localises to the cell membrane. The catalysed reaction is di-trans,octa-cis-undecaprenyl diphosphate + H2O = di-trans,octa-cis-undecaprenyl phosphate + phosphate + H(+). In terms of biological role, catalyzes the dephosphorylation of undecaprenyl diphosphate (UPP). Confers resistance to bacitracin. The protein is Undecaprenyl-diphosphatase of Macrococcus caseolyticus (strain JCSC5402) (Macrococcoides caseolyticum).